We begin with the raw amino-acid sequence, 1172 residues long: Thrombospondin-2 (1172 aa).

Positions 1–18 (MVWRLVLLALWVWPSTQA) are cleaved as a signal peptide. Residues 19–215 (GHQDKDTTFD…LQNVHLVFEN (197 aa)) enclose the Laminin G-like domain. The heparin-binding stretch occupies residues 19–232 (GHQDKDTTFD…KKGCQQGQGA (214 aa)). N151, N316, and N330 each carry an N-linked (GlcNAc...) asparagine glycan. The VWFC domain maps to 318-375 (SACWQDGRFFAENETWVVDSCTTCTCKKFKTICHQITCPPATCASPSFVEGECCPSCL). TSP type-1 domains are found at residues 381-431 (EEGW…SKCD), 437-492 (DGGW…APCP), and 494-549 (DGRW…RSCP). Disulfide bonds link C393–C425, C397–C430, C408–C415, C449–C486, C453–C491, C464–C476, C506–C543, C510–C548, C521–C533, C553–C564, C558–C574, C577–C588, C594–C610, C601–C619, C622–C646, C652–C665, C659–C678, C680–C691, C707–C715, C720–C740, C756–C776, C779–C799, C815–C835, C838–C858, C876–C896, C912–C932, and C948–C1169. N-linked (GlcNAc...) asparagine glycosylation is present at N457. The EGF-like 1 domain occupies 549 to 589 (PVDGCLSNPCFPGAQCSSFPDGSWSCGSCPVGFLGNGTHCE). A glycan (N-linked (GlcNAc...) asparagine) is linked at N584. Residues 648–692 (PENPCKDKTHNCHKHAECIYLGHFSDPMYKCECQTGYAGDGLICG) enclose the EGF-like 2 domain. TSP type-3 repeat units lie at residues 693-728 (EDSD…NSGQ), 729-764 (EDFD…NPRQ), 765-787 (ADYD…NPAQ), 788-823 (IDTD…NTDQ), 824-846 (RDTD…NPDQ), 847-884 (TDVD…NANQ), 885-920 (ADHD…NPDQ), and 921-956 (EDLD…AISE). The N-linked (GlcNAc...) asparagine glycan is linked to N710. Positions 843–931 (NPDQTDVDND…DLDGDGRGDI (89 aa)) are disordered. Over residues 847–866 (TDVDNDLVGDQCDNNEDIDD) the composition is skewed to acidic residues. Over residues 870–884 (QNNQDNCPYISNANQ) the composition is skewed to polar residues. The segment covering 896–905 (CDPDDDNDGV) has biased composition (acidic residues). A Cell attachment site motif is present at residues 928–930 (RGD). A TSP C-terminal domain is found at 960-1172 (RNFQMVPLDP…SDLKYECRDI (213 aa)). An N-linked (GlcNAc...) asparagine glycan is attached at N1069.

Belongs to the thrombospondin family. In terms of assembly, homotrimer; disulfide-linked. Interacts (via the TSP type I repeats) with CD36; the interaction conveys an antiangiogenic effect. Interacts (via the TSP type I repeats) with HRG; the interaction blocks the antiangiogenic effect of THBS2 with CD36. Can bind to fibrinogen, fibronectin, laminin and type V collagen. As to expression, high expression in invertebral disk tissue.

Functionally, adhesive glycoprotein that mediates cell-to-cell and cell-to-matrix interactions. Ligand for CD36 mediating antiangiogenic properties. This chain is Thrombospondin-2 (THBS2), found in Homo sapiens (Human).